We begin with the raw amino-acid sequence, 291 residues long: Probable 2-(5''-triphosphoribosyl)-3'-dephosphocoenzyme-A synthase (291 aa).

This sequence belongs to the CitG/MdcB family.

The catalysed reaction is 3'-dephospho-CoA + ATP = 2'-(5''-triphospho-alpha-D-ribosyl)-3'-dephospho-CoA + adenine. Involved in the formation of 2-(5''-phosphoribosyl)-3'-dephosphocoenzyme-A, the prosthetic group of the acyl-carrier protein of the malonate decarboxylase. This chain is Probable 2-(5''-triphosphoribosyl)-3'-dephosphocoenzyme-A synthase, found in Pseudomonas syringae pv. tomato (strain ATCC BAA-871 / DC3000).